Here is an 884-residue protein sequence, read N- to C-terminus: DNA mismatch repair protein MutS (884 aa).

643 to 650 (GPNMGGKS) contributes to the ATP binding site.

The protein belongs to the DNA mismatch repair MutS family.

This protein is involved in the repair of mismatches in DNA. It is possible that it carries out the mismatch recognition step. This protein has a weak ATPase activity. This is DNA mismatch repair protein MutS from Methylobacillus flagellatus (strain ATCC 51484 / DSM 6875 / VKM B-1610 / KT).